Consider the following 221-residue polypeptide: uncharacterized protein (221 aa).

Positions 20–63 constitute a CUE domain; that stretch reads DFDRAMLDFQAMFPSLSNSHIEYVLRKYDGDVSATINELLYDNT. The tract at residues 131–194 is disordered; sequence EEKKKKSCSD…GPYIGEGEVK (64 aa). Residues 156-166 are compositionally biased toward low complexity; the sequence is KNSKNSKISVN. Residues 169–183 show a composition bias toward basic and acidic residues; it reads KKLEPRRRSDEDRVP.

This is an uncharacterized protein from Caenorhabditis elegans.